A 459-amino-acid chain; its full sequence is 4,4'-diaponeurosporen-aldehyde dehydrogenase (459 aa).

NAD(+) is bound by residues phenylalanine 114–asparagine 115 and glycine 188–serine 189. Glutamate 210 functions as the Proton acceptor in the catalytic mechanism. Methionine 211 contacts NAD(+). Cysteine 244 functions as the Nucleophile in the catalytic mechanism. An NAD(+)-binding site is contributed by glutamate 336.

The protein belongs to the aldehyde dehydrogenase family.

It carries out the reaction 4,4'-diaponeurosporenal + NAD(+) + H2O = 4,4'-diaponeurosporenoate + NADH + 2 H(+). The protein operates within carotenoid biosynthesis; staphyloxanthin biosynthesis; staphyloxanthin from farnesyl diphosphate. Involved in the biosynthesis of the yellow-orange carotenoid staphyloxanthin, which plays a role in the virulence via its protective function against oxidative stress. Catalyzes the oxidation of 4,4'-diaponeurosporen-4-al to yield 4,4'-diaponeurosporenoic acid. This Staphylococcus aureus (strain NCTC 8325 / PS 47) protein is 4,4'-diaponeurosporen-aldehyde dehydrogenase.